Reading from the N-terminus, the 314-residue chain is Aspartate carbamoyltransferase catalytic subunit (314 aa).

Residues Arg58 and Thr59 each coordinate carbamoyl phosphate. Lys86 serves as a coordination point for L-aspartate. Residues Arg108, His136, and Gln139 each coordinate carbamoyl phosphate. 2 residues coordinate L-aspartate: Arg169 and Arg223. 2 residues coordinate carbamoyl phosphate: Gly264 and Pro265.

It belongs to the aspartate/ornithine carbamoyltransferase superfamily. ATCase family. Heterododecamer (2C3:3R2) of six catalytic PyrB chains organized as two trimers (C3), and six regulatory PyrI chains organized as three dimers (R2).

The enzyme catalyses carbamoyl phosphate + L-aspartate = N-carbamoyl-L-aspartate + phosphate + H(+). The protein operates within pyrimidine metabolism; UMP biosynthesis via de novo pathway; (S)-dihydroorotate from bicarbonate: step 2/3. In terms of biological role, catalyzes the condensation of carbamoyl phosphate and aspartate to form carbamoyl aspartate and inorganic phosphate, the committed step in the de novo pyrimidine nucleotide biosynthesis pathway. This is Aspartate carbamoyltransferase catalytic subunit from Jannaschia sp. (strain CCS1).